The following is an 870-amino-acid chain: Probable disease resistance protein At1g59620 (870 aa).

Residues 123 to 432 form the NB-ARC domain; sequence DKRNMRQTFS…AAEGMPRPRY (310 aa). Residue 167–174 coordinates ATP; that stretch reads GMGGIGKT. LRR repeat units lie at residues 543-567, 568-590, 703-726, 735-758, 759-786, and 808-833; these read LQLM…IGLL, IHLR…MQNL, MSGI…IYMP, PWHL…ILEK, LLQL…GFPQ, and MPRL…KFIT.

It belongs to the disease resistance NB-LRR family.

Functionally, probable disease resistance protein. In Arabidopsis thaliana (Mouse-ear cress), this protein is Probable disease resistance protein At1g59620.